A 1253-amino-acid chain; its full sequence is Cytoplasmic FMR1-interacting protein 2 (1253 aa).

At Lys1037 the chain carries N6-acetyllysine.

Belongs to the CYFIP family. In terms of assembly, component of the WAVE1 complex composed of ABI2, CYFIP2, BRK1, NCKAP1 and WASF1/WAVE1. Interacts with RAC1 (activated form) which causes the complex to dissociate, releasing activated WASF1. The complex can also be activated by NCK1. Interacts with SHANK3; the interaction mediates the association of SHANK3 with the WAVE1 complex. Interacts with FMR1; the interaction occurs in a RNA-dependent manner. Interacts with FXR1 and FXR2. Interacts with TMEM108 (via N-terminus); the interaction associates TMEM108 with the WAVE1 complex.

The protein localises to the cytoplasm. The protein resides in the nucleus. It is found in the perinuclear region. It localises to the synapse. Its subcellular location is the synaptosome. Its function is as follows. Involved in T-cell adhesion and p53-dependent induction of apoptosis. Does not bind RNA. As component of the WAVE1 complex, required for BDNF-NTRK2 endocytic trafficking and signaling from early endosomes. This chain is Cytoplasmic FMR1-interacting protein 2, found in Pongo abelii (Sumatran orangutan).